The chain runs to 154 residues: Small ribosomal subunit protein uS15 (154 aa).

Basic residues predominate over residues 1 to 14 (MAPVPHRSRHKKGR). The disordered stretch occupies residues 1–24 (MAPVPHRSRHKKGRSGSVRPAHPT).

The protein belongs to the universal ribosomal protein uS15 family. As to quaternary structure, part of the 30S ribosomal subunit.

The sequence is that of Small ribosomal subunit protein uS15 from Pyrobaculum arsenaticum (strain DSM 13514 / JCM 11321 / PZ6).